Here is a 461-residue protein sequence, read N- to C-terminus: Bifunctional protein GlmU (461 aa).

Residues 1-230 form a pyrophosphorylase region; that stretch reads MSKIHAVVLA…PEETLGVNDR (230 aa). UDP-N-acetyl-alpha-D-glucosamine-binding positions include 9-12, lysine 23, glutamine 73, 78-79, 101-103, glycine 140, glutamate 155, asparagine 170, and asparagine 228; these read LAAG, GT, and YGD. Aspartate 103 is a Mg(2+) binding site. A Mg(2+)-binding site is contributed by asparagine 228. The interval 231-251 is linker; the sequence is VQLSEAEAYMKKRIMTGHMRN. Positions 252–461 are N-acetyltransferase; it reads GVTIIDPTST…KMPRKGKKQS (210 aa). Positions 333 and 351 each coordinate UDP-N-acetyl-alpha-D-glucosamine. The active-site Proton acceptor is histidine 363. UDP-N-acetyl-alpha-D-glucosamine contacts are provided by tyrosine 366 and asparagine 377. Acetyl-CoA contacts are provided by residues 386–387, alanine 423, and arginine 440; that span reads NY.

This sequence in the N-terminal section; belongs to the N-acetylglucosamine-1-phosphate uridyltransferase family. The protein in the C-terminal section; belongs to the transferase hexapeptide repeat family. Homotrimer. The cofactor is Mg(2+).

It localises to the cytoplasm. The catalysed reaction is alpha-D-glucosamine 1-phosphate + acetyl-CoA = N-acetyl-alpha-D-glucosamine 1-phosphate + CoA + H(+). The enzyme catalyses N-acetyl-alpha-D-glucosamine 1-phosphate + UTP + H(+) = UDP-N-acetyl-alpha-D-glucosamine + diphosphate. Its pathway is nucleotide-sugar biosynthesis; UDP-N-acetyl-alpha-D-glucosamine biosynthesis; N-acetyl-alpha-D-glucosamine 1-phosphate from alpha-D-glucosamine 6-phosphate (route II): step 2/2. It functions in the pathway nucleotide-sugar biosynthesis; UDP-N-acetyl-alpha-D-glucosamine biosynthesis; UDP-N-acetyl-alpha-D-glucosamine from N-acetyl-alpha-D-glucosamine 1-phosphate: step 1/1. The protein operates within bacterial outer membrane biogenesis; LPS lipid A biosynthesis. In terms of biological role, catalyzes the last two sequential reactions in the de novo biosynthetic pathway for UDP-N-acetylglucosamine (UDP-GlcNAc). The C-terminal domain catalyzes the transfer of acetyl group from acetyl coenzyme A to glucosamine-1-phosphate (GlcN-1-P) to produce N-acetylglucosamine-1-phosphate (GlcNAc-1-P), which is converted into UDP-GlcNAc by the transfer of uridine 5-monophosphate (from uridine 5-triphosphate), a reaction catalyzed by the N-terminal domain. This Brevibacillus brevis (strain 47 / JCM 6285 / NBRC 100599) protein is Bifunctional protein GlmU.